The following is a 260-amino-acid chain: Snake venom serine protease homolog 1 (260 aa).

Positions 1–18 (MVLIRVLANLLILQLSYA) are cleaved as a signal peptide. A propeptide spanning residues 19–24 (QKSSEL) is cleaved from the precursor. The Peptidase S1 domain occupies 25–251 (IIGGDECNIN…HLDWIKSIIA (227 aa)). Cystine bridges form between Cys31–Cys165, Cys52–Cys68, Cys100–Cys258, Cys144–Cys212, Cys176–Cys191, and Cys202–Cys227. N-linked (GlcNAc...) asparagine glycans are attached at residues Asn83, Asn123, and Asn124.

The protein belongs to the peptidase S1 family. Snake venom subfamily. Expressed by the venom gland.

The protein resides in the secreted. Its function is as follows. Snake venom serine protease homolog that may act in the hemostasis system of the prey. This chain is Snake venom serine protease homolog 1, found in Trimeresurus stejnegeri (Chinese green tree viper).